The sequence spans 113 residues: Putative increased recombination centers protein 14 (113 aa).

The protein is Putative increased recombination centers protein 14 (IRC14) of Saccharomyces cerevisiae (strain ATCC 204508 / S288c) (Baker's yeast).